The chain runs to 453 residues: Ribosomal protein uS12 methylthiotransferase RimO (453 aa).

Residues 5–120 (PKVGFVSLGC…VMQAVHSHLP (116 aa)) enclose the MTTase N-terminal domain. [4Fe-4S] cluster-binding residues include cysteine 14, cysteine 50, cysteine 79, cysteine 151, cysteine 155, and cysteine 158. The region spanning 137 to 383 (LTPRHYAYLK…EVAEEVSAHR (247 aa)) is the Radical SAM core domain. The region spanning 385–453 (QRKVGKTLKV…ADGHDLWGEV (69 aa)) is the TRAM domain.

It belongs to the methylthiotransferase family. RimO subfamily. It depends on [4Fe-4S] cluster as a cofactor.

Its subcellular location is the cytoplasm. The catalysed reaction is L-aspartate(89)-[ribosomal protein uS12]-hydrogen + (sulfur carrier)-SH + AH2 + 2 S-adenosyl-L-methionine = 3-methylsulfanyl-L-aspartate(89)-[ribosomal protein uS12]-hydrogen + (sulfur carrier)-H + 5'-deoxyadenosine + L-methionine + A + S-adenosyl-L-homocysteine + 2 H(+). In terms of biological role, catalyzes the methylthiolation of an aspartic acid residue of ribosomal protein uS12. The polypeptide is Ribosomal protein uS12 methylthiotransferase RimO (Burkholderia cenocepacia (strain ATCC BAA-245 / DSM 16553 / LMG 16656 / NCTC 13227 / J2315 / CF5610) (Burkholderia cepacia (strain J2315))).